Here is a 302-residue protein sequence, read N- to C-terminus: Elongation factor Ts (302 aa).

The involved in Mg(2+) ion dislocation from EF-Tu stretch occupies residues Thr80–Val83.

This sequence belongs to the EF-Ts family.

Its subcellular location is the cytoplasm. Functionally, associates with the EF-Tu.GDP complex and induces the exchange of GDP to GTP. It remains bound to the aminoacyl-tRNA.EF-Tu.GTP complex up to the GTP hydrolysis stage on the ribosome. The sequence is that of Elongation factor Ts from Gluconobacter oxydans (strain 621H) (Gluconobacter suboxydans).